Reading from the N-terminus, the 320-residue chain is uncharacterized protein (320 aa).

Residues Ala13–Glu132 form the Arf-GAP domain. The C4-type zinc finger occupies Cys28–Cys52. Disordered regions lie at residues Asn153–Gln212, Arg227–Phe261, and Asn284–Lys320. A compositionally biased stretch (low complexity) spans Thr154 to Thr176. Polar residues-rich tracts occupy residues Ser183 to Thr210 and Pro228 to Leu244. 2 stretches are compositionally biased toward low complexity: residues Pro245 to Pro257 and Ser295 to Ser310.

The protein resides in the cytoplasm. It is found in the golgi apparatus. Its function is as follows. GTPase-activating protein for the ADP ribosylation factor family. This is an uncharacterized protein from Schizosaccharomyces pombe (strain 972 / ATCC 24843) (Fission yeast).